The chain runs to 149 residues: Transthyretin (149 aa).

The N-terminal stretch at 1 to 22 (MAFHSLLLLCLAGLAFVSETAA) is a signal peptide. C32 bears the Sulfocysteine mark. K37 is a binding site for L-thyroxine. E64 carries the post-translational modification 4-carboxyglutamate. 2 residues coordinate L-thyroxine: E76 and S139.

The protein belongs to the transthyretin family. Homotetramer. Dimer of dimers. In the homotetramer, subunits assemble around a central channel that can accommodate two ligand molecules. Interacts with RBP4. Sulfonation of the reactive cysteine Cys-32 enhances the stability of the native conformation of TTR, avoiding misassembly of the protein leading to amyloid formation. In terms of tissue distribution, detected in liver.

It localises to the secreted. Functionally, thyroid hormone-binding protein. Probably transports thyroxine from the bloodstream to the brain. The polypeptide is Transthyretin (TTR) (Macropus giganteus (Eastern gray kangaroo)).